We begin with the raw amino-acid sequence, 250 residues long: MTALLSPDQLEADLRAIGARLYHDQHPFHALLHHGKLDRGQVQAWALNRFEYQRCIPLKDAAILARMEDPALRRIWRQRILDHDGNSPSDGGIARWLHLTDALGLPRELVESGRALLPGTRFAVQAYLHFVREKSLLEAIASSLTELFAPNIIGQRVAGMLQHYDFVSPEALAYFEHRLTEAPRDSDFALDYVKQHADTIEKQQLVKAALHFKCSVLWAQLDALHVAYVSPGVVWPDAFVPERDSKRAAA.

The protein belongs to the PqqC family.

It catalyses the reaction 6-(2-amino-2-carboxyethyl)-7,8-dioxo-1,2,3,4,7,8-hexahydroquinoline-2,4-dicarboxylate + 3 O2 = pyrroloquinoline quinone + 2 H2O2 + 2 H2O + H(+). It functions in the pathway cofactor biosynthesis; pyrroloquinoline quinone biosynthesis. Its function is as follows. Ring cyclization and eight-electron oxidation of 3a-(2-amino-2-carboxyethyl)-4,5-dioxo-4,5,6,7,8,9-hexahydroquinoline-7,9-dicarboxylic-acid to PQQ. This chain is Pyrroloquinoline-quinone synthase, found in Xanthomonas campestris pv. campestris (strain B100).